The following is a 182-amino-acid chain: Acireductone dioxygenase (182 aa).

4 residues coordinate Fe(2+): H100, H102, E106, and H145. Residues H100, H102, E106, and H145 each coordinate Ni(2+).

It belongs to the acireductone dioxygenase (ARD) family. As to quaternary structure, monomer. The cofactor is Fe(2+). It depends on Ni(2+) as a cofactor.

It carries out the reaction 1,2-dihydroxy-5-(methylsulfanyl)pent-1-en-3-one + O2 = 3-(methylsulfanyl)propanoate + CO + formate + 2 H(+). It catalyses the reaction 1,2-dihydroxy-5-(methylsulfanyl)pent-1-en-3-one + O2 = 4-methylsulfanyl-2-oxobutanoate + formate + 2 H(+). It participates in amino-acid biosynthesis; L-methionine biosynthesis via salvage pathway; L-methionine from S-methyl-5-thio-alpha-D-ribose 1-phosphate: step 5/6. In terms of biological role, catalyzes 2 different reactions between oxygen and the acireductone 1,2-dihydroxy-3-keto-5-methylthiopentene (DHK-MTPene) depending upon the metal bound in the active site. Fe-containing acireductone dioxygenase (Fe-ARD) produces formate and 2-keto-4-methylthiobutyrate (KMTB), the alpha-ketoacid precursor of methionine in the methionine recycle pathway. Ni-containing acireductone dioxygenase (Ni-ARD) produces methylthiopropionate, carbon monoxide and formate, and does not lie on the methionine recycle pathway. This Trichormus variabilis (strain ATCC 29413 / PCC 7937) (Anabaena variabilis) protein is Acireductone dioxygenase.